The chain runs to 237 residues: AA9 family lytic polysaccharide monooxygenase C (237 aa).

A signal peptide spans methionine 1 to alanine 15. Histidine 16 and histidine 99 together coordinate Cu(2+). Cystine bridges form between cysteine 54-cysteine 185 and cysteine 155-cysteine 237. Asparagine 112 carries an N-linked (GlcNAc...) asparagine glycan. O2 contacts are provided by histidine 171 and glutamine 180. Tyrosine 182 contacts Cu(2+).

It belongs to the polysaccharide monooxygenase AA9 family. Requires Cu(2+) as cofactor.

It localises to the secreted. It carries out the reaction [(1-&gt;4)-beta-D-glucosyl]n+m + reduced acceptor + O2 = 4-dehydro-beta-D-glucosyl-[(1-&gt;4)-beta-D-glucosyl]n-1 + [(1-&gt;4)-beta-D-glucosyl]m + acceptor + H2O.. With respect to regulation, is able to utilize various natural phenolic compounds as reducing agents. Most of these reducing agents are present in plants, either free or as lignin building blocks, such as sinapic acid, or as flavonoids such as catechin and dopamine. Phenolic compounds with 1,2-benzenediol and 1,2,3-benzenetriol moieties yield the highest release of oxidized and non-oxidized glucooligosaccharides from cellulose compared to monophenols or sulfur-containing compounds. Functionally, lytic polysaccharide monooxygenase (LPMO) that depolymerizes crystalline and amorphous polysaccharides via the oxidation of scissile alpha- or beta-(1-4)-glycosidic bonds, yielding C4 oxidation products. Catalysis by LPMOs requires the reduction of the active-site copper from Cu(II) to Cu(I) by a reducing agent and H(2)O(2) or O(2) as a cosubstrate. Shows oxidative cleavage of beta-(1-3, 1-4)-glucan from oat spelt or xyloglucan from tamarind seed, in addition to cellulose. In Thermothelomyces thermophilus (strain ATCC 42464 / BCRC 31852 / DSM 1799) (Sporotrichum thermophile), this protein is AA9 family lytic polysaccharide monooxygenase C.